The chain runs to 287 residues: Large ribosomal subunit protein uL2 (287 aa).

The interval 221–287 (RGSVMNPCDH…SKRSRGGRDS (67 aa)) is disordered. A compositionally biased stretch (basic residues) spans 258–287 (KTRKRNKPSNRFVLRKRRRTSKRSRGGRDS).

Belongs to the universal ribosomal protein uL2 family. Part of the 50S ribosomal subunit. Forms a bridge to the 30S subunit in the 70S ribosome.

Functionally, one of the primary rRNA binding proteins. Required for association of the 30S and 50S subunits to form the 70S ribosome, for tRNA binding and peptide bond formation. It has been suggested to have peptidyltransferase activity; this is somewhat controversial. Makes several contacts with the 16S rRNA in the 70S ribosome. The chain is Large ribosomal subunit protein uL2 from Prochlorococcus marinus (strain MIT 9303).